A 275-amino-acid polypeptide reads, in one-letter code: Ribosomal RNA small subunit methyltransferase A (275 aa).

The S-adenosyl-L-methionine site is built by Asn21, Leu23, Gly48, Glu69, Asp94, and Asn115.

It belongs to the class I-like SAM-binding methyltransferase superfamily. rRNA adenine N(6)-methyltransferase family. RsmA subfamily.

It localises to the cytoplasm. The enzyme catalyses adenosine(1518)/adenosine(1519) in 16S rRNA + 4 S-adenosyl-L-methionine = N(6)-dimethyladenosine(1518)/N(6)-dimethyladenosine(1519) in 16S rRNA + 4 S-adenosyl-L-homocysteine + 4 H(+). Its function is as follows. Specifically dimethylates two adjacent adenosines (A1518 and A1519) in the loop of a conserved hairpin near the 3'-end of 16S rRNA in the 30S particle. May play a critical role in biogenesis of 30S subunits. The sequence is that of Ribosomal RNA small subunit methyltransferase A from Clostridium botulinum (strain ATCC 19397 / Type A).